We begin with the raw amino-acid sequence, 91 residues long: RNA-binding protein Hfq (91 aa).

Residues 9–68 enclose the Sm domain; that stretch reads DPFLNALRRERVPVSIYLVNGIKLQGQVESFDQFVILLKNTVSQMVYKHAISTVVPSRPF. The interval 66–91 is disordered; it reads RPFNVGSHQGGSSNYNAQQDDSAGEQ. Over residues 71-91 the composition is skewed to polar residues; sequence GSHQGGSSNYNAQQDDSAGEQ.

It belongs to the Hfq family. As to quaternary structure, homohexamer.

Functionally, RNA chaperone that binds small regulatory RNA (sRNAs) and mRNAs to facilitate mRNA translational regulation in response to envelope stress, environmental stress and changes in metabolite concentrations. Also binds with high specificity to tRNAs. In Shewanella amazonensis (strain ATCC BAA-1098 / SB2B), this protein is RNA-binding protein Hfq.